Consider the following 74-residue polypeptide: uncharacterized protein (74 aa).

This is an uncharacterized protein from Schizosaccharomyces pombe (strain 972 / ATCC 24843) (Fission yeast).